The primary structure comprises 1464 residues: Glutamate receptor ionotropic, NMDA 2A (1464 aa).

Positions 1 to 22 are cleaved as a signal peptide; sequence MGRVGYWTLLVLPALLVWRGPA. Over 23-556 the chain is Extracellular; that stretch reads PSAAAEKGPP…SAFLEPFSAS (534 aa). H44 is a Zn(2+) binding site. N-linked (GlcNAc...) asparagine glycosylation is present at N75. An intrachain disulfide couples C87 to C320. Zn(2+)-binding residues include H128, E266, and D282. Residues N340, N380, N443, and N444 are each glycosylated (N-linked (GlcNAc...) asparagine). 2 disulfide bridges follow: C429–C455 and C436–C456. Residues S511, T513, and R518 each coordinate L-glutamate. N541 carries N-linked (GlcNAc...) asparagine glycosylation. Residues 557-576 form a helical membrane-spanning segment; sequence VWVMMFVMLLIVSAIAVFVF. The Cytoplasmic segment spans residues 577-600; it reads EYFSPVGYNRNLAKGKAPHGPSFT. The tract at residues 599–620 is pore-forming; sequence FTIGKAIWLLWGLVFNNSVPVQ. The discontinuously helical intramembrane region spans 601-615; it reads IGKAIWLLWGLVFNN. Residues 616–625 are Cytoplasmic-facing; the sequence is SVPVQNPKGT. Residues 626–646 traverse the membrane as a helical segment; it reads TSKIMVSVWAFFAVIFLASYT. Residues 647–814 are Extracellular-facing; that stretch reads ANLAAFMIQE…NEVMSSQLDI (168 aa). N687 carries an N-linked (GlcNAc...) asparagine glycan. S689, T690, and D731 together coordinate L-glutamate. C745 and C800 are oxidised to a cystine. A helical transmembrane segment spans residues 815–835; the sequence is DNMAGVFYMLAAAMALSLITF. The Cytoplasmic portion of the chain corresponds to 836-1464; that stretch reads IWEHLFYWKL…KKMPSIESDV (629 aa). 3 positions are modified to phosphoserine: S882, S890, and S929. Polar residues-rich tracts occupy residues 1001–1010 and 1023–1032; these read STESKVNSRP and QDSLSQNPVS. Disordered regions lie at residues 1001 to 1088 and 1148 to 1180; these read STES…NFKR and PDPYQDPSENLRKGDSTLPMNRNPLQNEEGLSN. S1025 is subject to Phosphoserine. Composition is skewed to basic and acidic residues over residues 1033 to 1043 and 1052 to 1061; these read QRDEATAENRT and LPEEMAHSDI. A phosphoserine mark is found at S1059 and S1062. The span at 1070 to 1087 shows a compositional bias: basic and acidic residues; the sequence is CHREPDNSKNPKTKDNFK. The segment covering 1165–1180 has biased composition (polar residues); that stretch reads LPMNRNPLQNEEGLSN. A phosphoserine mark is found at S1198 and S1291. A disordered region spans residues 1335–1372; it reads KLSGKKSSLFPQGLEDSKRSKSLLPDHTSDNPFLHSHR. A PDZ-binding motif is present at residues 1462-1464; it reads SDV.

It belongs to the glutamate-gated ion channel (TC 1.A.10.1) family. NR2A/GRIN2A subfamily. As to quaternary structure, heterotetramer. Forms heterotetrameric channels composed of two GluN1/zeta subunits (GRIN1), and two identical GluN2/epsilon subunits (GRIN2A, GRIN2B, GRIN2C or GRIN2D) or GluN3 subunits (GRIN3A or GRIN3B) (in vitro). Can also form heterotetrameric channels that contain at least two GluN1 subunits and at least two different GluN2 subunits (or a combination of one GluN2 and one GluN3 subunits) (in vitro). In vivo, the subunit composition may depend on the expression levels of the different subunits. Found in a complex with GRIN1, GRIN3A and PPP2CB. Found in a complex with GRIN1 and GRIN3B. Interacts with AIP1. Interacts with HIP1 and NETO1. Interacts with SNX27 (via PDZ domain); the interaction is required for recycling to the plasma membrane when endocytosed and prevent degradation in lysosomes. Interacts with PDZ domains of PATJ and DLG4. Interacts with LRFN2. Interacts with RPH3A and DLG4; this ternary complex regulates NMDA receptor composition at postsynaptic membranes. Interacts with SORCS2. Interacts with ARC; preventing ARC oligomerization. Interacts (via the extreme C-terminus) with FRMPD2 (the second PDZ domain); the interaction is direct and is likely to promote NMDAR-mediated neural signal transmission. GRIN2A binds FRMPD2 with lower affinity than GRIN2B.

Its subcellular location is the cell projection. The protein localises to the dendritic spine. It localises to the cell membrane. The protein resides in the synapse. It is found in the postsynaptic cell membrane. Its subcellular location is the cytoplasmic vesicle membrane. It catalyses the reaction Ca(2+)(in) = Ca(2+)(out). It carries out the reaction Na(+)(in) = Na(+)(out). The enzyme catalyses K(+)(in) = K(+)(out). In terms of biological role, component of N-methyl-D-aspartate (NMDA) receptors (NMDARs) that function as heterotetrameric, ligand-gated cation channels with high calcium permeability and voltage-dependent block by Mg(2+). NMDARs participate in synaptic plasticity for learning and memory formation by contributing to the slow phase of excitatory postsynaptic current, long-term synaptic potentiation, and learning. Channel activation requires binding of the neurotransmitter L-glutamate to the GluN2 subunit, glycine or D-serine binding to the GluN1 subunit, plus membrane depolarization to eliminate channel inhibition by Mg(2+). NMDARs mediate simultaneously the potasium efflux and the influx of calcium and sodium. Each GluN2 subunit confers differential attributes to channel properties, including activation, deactivation and desensitization kinetics, pH sensitivity, Ca2(+) permeability, and binding to allosteric modulators. Participates in the synaptic plasticity regulation through activation by the L-glutamate releaseed by BEST1, into the synaptic cleft, upon F2R/PAR-1 activation in astrocyte. This chain is Glutamate receptor ionotropic, NMDA 2A, found in Pan troglodytes (Chimpanzee).